The chain runs to 141 residues: Large ribosomal subunit protein uL11 (141 aa).

The protein belongs to the universal ribosomal protein uL11 family. In terms of assembly, part of the ribosomal stalk of the 50S ribosomal subunit. Interacts with L10 and the large rRNA to form the base of the stalk. L10 forms an elongated spine to which L12 dimers bind in a sequential fashion forming a multimeric L10(L12)X complex. In terms of processing, one or more lysine residues are methylated.

Forms part of the ribosomal stalk which helps the ribosome interact with GTP-bound translation factors. The chain is Large ribosomal subunit protein uL11 from Lactococcus lactis subsp. cremoris (strain MG1363).